The sequence spans 889 residues: MGSCFSLQVSDQTLNRIFNCLIGKSYIRTLEKNLRALQREMEDLRAIQHEVQNKVARDEARHQRRLEAVQVWLDRVNSVDIECKDLLSVTPVELQKLCLCGLCSKYVCSSYKYGKKVFLLLEEVKKLNSEGNFDEVSQPPPRSEVEERPTQPTIGQEDMLEKAWNRLMEDGVGIMGLHGMGGVGKTTLFKKIHNKFAEIGGTFDIVIWIVVSKGVMISKLQEDIAEKLHLCDDLWKNKNESDKATDIHRVLKGKRFVLMLDDIWEKVDLEAIGIPYPSEVNKCKVAFTTRSREVCGEMGDHKPMQVNCLEPEDAWELFKNKVGDNTLSSDPVIVELAREVAQKCRGLPLALNVIGETMSSKTMVQEWEHAIHVFNTSAAEFSDMQNKILPILKYSYDSLGDEHIKSCFLYCALFPEDGEIYNEKLIDYWICEGFIGEDQVIKRARNKGYAMLGTLTRANLLTKVGTYYCVMHDVVREMALWIASDFGKQKENFVVQAGVGLHEIPKVKDWGAVRKMSLMDNDIEEITCESKCSELTTLFLQSNKLKNLPGAFIRYMQKLVVLDLSYNRDFNKLPEQISGLVSLQFLDLSNTSIEHMPIGLKELKKLTFLDLTYTDRLCSISGISRLLSLRLLRLLGSKVHGDASVLKELQQLQNLQELAITVSAELISLDQRLAKLISNLCIEGFLQKPFDLSFLASMENLSSLRVENSYFSEIKCRESETESSYLRINPKIPCFTNLSRLEIMKCHSMKDLTWILFAPNLVVLLIEDSREVGEIINKEKATNLTSITPFLKLEWLILYNLPKLESIYWSPLPFPVLLTMDVSNCPKLRKLPLNATSVSKVEEFEIHMYPPPEQENELEWEDDDTKNRFLPSIKPYKYFVYPGMSFLTV.

Positions 19–64 form a coiled coil; that stretch reads NCLIGKSYIRTLEKNLRALQREMEDLRAIQHEVQNKVARDEARHQR. The tract at residues 131-152 is disordered; the sequence is GNFDEVSQPPPRSEVEERPTQP. The region spanning 137–440 is the NB-ARC domain; the sequence is SQPPPRSEVE…CEGFIGEDQV (304 aa). Residue 179–186 participates in ATP binding; that stretch reads GMGGVGKT. LRR repeat units lie at residues 510–532, 533–555, 557–580, 581–603, 604–625, 626–652, 653–676, 698–721, and 825–848; these read WGAVRKMSLMDNDIEEITCESKC, SELTTLFLQSNKLKNLPGAFIRY, QKLVVLDLSYNRDFNKLPEQISGL, VSLQFLDLSNTSIEHMPIGLKEL, KKLTFLDLTYTDRLCSISGISR, LLSLRLLRLLGSKVHGDASVLKELQQL, QNLQELAITVSAELISLDQRLAKL, MENLSSLRVENSYFSEIKCRESET, and CPKLRKLPLNATSVSKVEEFEIHM.

The protein belongs to the disease resistance NB-LRR family. As to quaternary structure, interacts with RPT2A.

Its function is as follows. Involved in disease resistance via the salicylic acid (SA) signaling pathway. Involved in shoot architecture development via the cytokinin signaling pathway. The protein is Disease resistance protein UNI of Arabidopsis thaliana (Mouse-ear cress).